A 105-amino-acid chain; its full sequence is Large ribosomal subunit protein P2 (105 aa).

This sequence belongs to the eukaryotic ribosomal protein P1/P2 family. P1 and P2 exist as dimers at the large ribosomal subunit. In terms of processing, phosphorylated.

Its function is as follows. Plays an important role in the elongation step of protein synthesis. In Leishmania braziliensis, this protein is Large ribosomal subunit protein P2 (LIP2).